The primary structure comprises 103 residues: Pyrimidine/purine nucleoside phosphorylase (103 aa).

The protein belongs to the nucleoside phosphorylase PpnP family.

It catalyses the reaction a purine D-ribonucleoside + phosphate = a purine nucleobase + alpha-D-ribose 1-phosphate. The catalysed reaction is adenosine + phosphate = alpha-D-ribose 1-phosphate + adenine. It carries out the reaction cytidine + phosphate = cytosine + alpha-D-ribose 1-phosphate. The enzyme catalyses guanosine + phosphate = alpha-D-ribose 1-phosphate + guanine. It catalyses the reaction inosine + phosphate = alpha-D-ribose 1-phosphate + hypoxanthine. The catalysed reaction is thymidine + phosphate = 2-deoxy-alpha-D-ribose 1-phosphate + thymine. It carries out the reaction uridine + phosphate = alpha-D-ribose 1-phosphate + uracil. The enzyme catalyses xanthosine + phosphate = alpha-D-ribose 1-phosphate + xanthine. Functionally, catalyzes the phosphorolysis of diverse nucleosides, yielding D-ribose 1-phosphate and the respective free bases. Can use uridine, adenosine, guanosine, cytidine, thymidine, inosine and xanthosine as substrates. Also catalyzes the reverse reactions. In Methylobacillus flagellatus (strain ATCC 51484 / DSM 6875 / VKM B-1610 / KT), this protein is Pyrimidine/purine nucleoside phosphorylase.